Consider the following 407-residue polypeptide: Phosphopentomutase (407 aa).

The Mn(2+) site is built by D10, D306, H311, D347, H348, and H359.

It belongs to the phosphopentomutase family. It depends on Mn(2+) as a cofactor.

The protein localises to the cytoplasm. It carries out the reaction 2-deoxy-alpha-D-ribose 1-phosphate = 2-deoxy-D-ribose 5-phosphate. The enzyme catalyses alpha-D-ribose 1-phosphate = D-ribose 5-phosphate. It functions in the pathway carbohydrate degradation; 2-deoxy-D-ribose 1-phosphate degradation; D-glyceraldehyde 3-phosphate and acetaldehyde from 2-deoxy-alpha-D-ribose 1-phosphate: step 1/2. Functionally, isomerase that catalyzes the conversion of deoxy-ribose 1-phosphate (dRib-1-P) and ribose 1-phosphate (Rib-1-P) to deoxy-ribose 5-phosphate (dRib-5-P) and ribose 5-phosphate (Rib-5-P), respectively. The sequence is that of Phosphopentomutase from Salmonella gallinarum (strain 287/91 / NCTC 13346).